We begin with the raw amino-acid sequence, 500 residues long: Tektin-like protein 1 (500 aa).

The stretch at 198 to 229 forms a coiled coil; the sequence is MLTWEKEELKSMKRKMEADMEKSEALLKTLAS. Tyr-372 is modified (phosphotyrosine). Residues 420 to 444 adopt a coiled-coil conformation; that stretch reads DKLQRHISHVEKNLDELLSMRKKLT.

As to quaternary structure, microtubule inner protein component of sperm flagellar doublet microtubules.

It localises to the cytoplasm. The protein localises to the cytoskeleton. The protein resides in the flagellum axoneme. Functionally, microtubule inner protein (MIP) part of the dynein-decorated doublet microtubules (DMTs) in sperm flagellar axoneme, which is required for motile flagellum beating. Forms an extensive interaction network cross-linking the lumen of axonemal doublet microtubules. The polypeptide is Tektin-like protein 1 (Bos taurus (Bovine)).